A 364-amino-acid polypeptide reads, in one-letter code: 2-oxoglutarate-dependent dioxygenase imqE (364 aa).

The tract at residues 73 to 92 is disordered; that stretch reads KQKAAHPPGPNPQRGWSGIG. The Fe2OG dioxygenase domain maps to 199–315; sequence DGSELRLLHY…RWSAAYFFKA (117 aa). Fe cation is bound by residues histidine 227, aspartate 229, and histidine 287. Residue arginine 306 participates in 2-oxoglutarate binding.

Belongs to the iron/ascorbate-dependent oxidoreductase family. Fe(2+) is required as a cofactor.

Its pathway is secondary metabolite biosynthesis. In terms of biological role, 2-oxoglutarate-dependent dioxygenase; part of the gene cluster that mediates the biosynthesis of imizoquins A to D, tripeptide-derived alkaloids that serve a protective role against oxidative stress that are essential for normal germination. ImqB is a canonical three-module NRPS that assembles the tripeptide backbone of the imizoquins via condensation of Trp, Tyr, and Leu-derived precursors. N-methylation by imqF and phenol oxidation by imqC, followed by cyclization via the FAD-dependent oxidase imqH carry out the three-step transformation of L-tyrosine into tetrahydroisoquinoline. Importantly, this sequence requires the presence of a free amine in the tyrosine moiety, indicating that isoquinoline formation occurs prior to peptide bond formation. The imidazolidin-4-one ring of imizoquins could form following additional oxidation of the methyl-derived bridgehead carbon by imqH. Lastly, O-methylation by imqG and leucine hydroxylation by imqE complete biosynthesis of the imizoquins. The protein is 2-oxoglutarate-dependent dioxygenase imqE of Aspergillus flavus (strain ATCC 200026 / FGSC A1120 / IAM 13836 / NRRL 3357 / JCM 12722 / SRRC 167).